A 53-amino-acid polypeptide reads, in one-letter code: ATP synthase F(0) complex subunit 8 (53 aa).

Residues P8 to L24 traverse the membrane as a helical segment.

Belongs to the ATPase protein 8 family. Component of the ATP synthase complex composed at least of ATP5F1A/subunit alpha, ATP5F1B/subunit beta, ATP5MC1/subunit c (homooctomer), MT-ATP6/subunit a, MT-ATP8/subunit 8, ATP5ME/subunit e, ATP5MF/subunit f, ATP5MG/subunit g, ATP5MK/subunit k, ATP5MJ/subunit j, ATP5F1C/subunit gamma, ATP5F1D/subunit delta, ATP5F1E/subunit epsilon, ATP5PF/subunit F6, ATP5PB/subunit b, ATP5PD/subunit d, ATP5PO/subunit OSCP. ATP synthase complex consists of a soluble F(1) head domain (subunits alpha(3) and beta(3)) - the catalytic core - and a membrane F(0) domain - the membrane proton channel (subunits c, a, 8, e, f, g, k and j). These two domains are linked by a central stalk (subunits gamma, delta, and epsilon) rotating inside the F1 region and a stationary peripheral stalk (subunits F6, b, d, and OSCP).

It is found in the mitochondrion membrane. Functionally, subunit 8, of the mitochondrial membrane ATP synthase complex (F(1)F(0) ATP synthase or Complex V) that produces ATP from ADP in the presence of a proton gradient across the membrane which is generated by electron transport complexes of the respiratory chain. ATP synthase complex consist of a soluble F(1) head domain - the catalytic core - and a membrane F(1) domain - the membrane proton channel. These two domains are linked by a central stalk rotating inside the F(1) region and a stationary peripheral stalk. During catalysis, ATP synthesis in the catalytic domain of F(1) is coupled via a rotary mechanism of the central stalk subunits to proton translocation. In vivo, can only synthesize ATP although its ATP hydrolase activity can be activated artificially in vitro. Part of the complex F(0) domain. The chain is ATP synthase F(0) complex subunit 8 from Alligator mississippiensis (American alligator).